A 234-amino-acid polypeptide reads, in one-letter code: Leucyl/phenylalanyl-tRNA--protein transferase (234 aa).

This sequence belongs to the L/F-transferase family.

It localises to the cytoplasm. The enzyme catalyses N-terminal L-lysyl-[protein] + L-leucyl-tRNA(Leu) = N-terminal L-leucyl-L-lysyl-[protein] + tRNA(Leu) + H(+). It carries out the reaction N-terminal L-arginyl-[protein] + L-leucyl-tRNA(Leu) = N-terminal L-leucyl-L-arginyl-[protein] + tRNA(Leu) + H(+). The catalysed reaction is L-phenylalanyl-tRNA(Phe) + an N-terminal L-alpha-aminoacyl-[protein] = an N-terminal L-phenylalanyl-L-alpha-aminoacyl-[protein] + tRNA(Phe). In terms of biological role, functions in the N-end rule pathway of protein degradation where it conjugates Leu, Phe and, less efficiently, Met from aminoacyl-tRNAs to the N-termini of proteins containing an N-terminal arginine or lysine. In Escherichia coli O81 (strain ED1a), this protein is Leucyl/phenylalanyl-tRNA--protein transferase.